A 754-amino-acid chain; its full sequence is 5-methyltetrahydropteroyltriglutamate--homocysteine methyltransferase (754 aa).

5-methyltetrahydropteroyltri-L-glutamate is bound by residues 16 to 19 (RELK) and K114. Residues 430-432 (IGS) and E483 each bind L-homocysteine. Residues 430–432 (IGS) and E483 each bind L-methionine. Residues 514–515 (RC) and W560 each bind 5-methyltetrahydropteroyltri-L-glutamate. Residue D598 coordinates L-homocysteine. D598 provides a ligand contact to L-methionine. 5-methyltetrahydropteroyltri-L-glutamate is bound at residue E604. The Zn(2+) site is built by H640, C642, and E664. H693 acts as the Proton donor in catalysis. C725 contributes to the Zn(2+) binding site.

The protein belongs to the vitamin-B12 independent methionine synthase family. Requires Zn(2+) as cofactor.

The enzyme catalyses 5-methyltetrahydropteroyltri-L-glutamate + L-homocysteine = tetrahydropteroyltri-L-glutamate + L-methionine. The protein operates within amino-acid biosynthesis; L-methionine biosynthesis via de novo pathway; L-methionine from L-homocysteine (MetE route): step 1/1. Its function is as follows. Catalyzes the transfer of a methyl group from 5-methyltetrahydrofolate to homocysteine resulting in methionine formation. This chain is 5-methyltetrahydropteroyltriglutamate--homocysteine methyltransferase, found in Aeromonas salmonicida (strain A449).